The following is a 389-amino-acid chain: Na(+)/H(+) antiporter NhaA (389 aa).

The next 11 membrane-spanning stretches (helical) occupy residues 14 to 34 (AGGI…NSPL), 59 to 79 (LLLW…GLEV), 95 to 115 (SLPS…YLLF), 124 to 144 (AGWA…MALL), 154 to 174 (VFLL…IALF), 177 to 197 (SDLS…LVGL), 213 to 233 (LILW…GVII), 261 to 281 (FLIL…NMSL), 290 to 310 (IGIA…FSFI), 328 to 348 (IAPV…IASL), and 363 to 383 (LGTL…LSKV).

Belongs to the NhaA Na(+)/H(+) (TC 2.A.33) antiporter family.

Its subcellular location is the cell inner membrane. The catalysed reaction is Na(+)(in) + 2 H(+)(out) = Na(+)(out) + 2 H(+)(in). Its function is as follows. Na(+)/H(+) antiporter that extrudes sodium in exchange for external protons. The sequence is that of Na(+)/H(+) antiporter NhaA from Shewanella sp. (strain W3-18-1).